Reading from the N-terminus, the 370-residue chain is A-type ATP synthase subunit C (370 aa).

The protein belongs to the V-ATPase V0D/AC39 subunit family. Has multiple subunits with at least A(3), B(3), C, D, E, F, H, I and proteolipid K(x).

It is found in the cell membrane. Component of the A-type ATP synthase that produces ATP from ADP in the presence of a proton gradient across the membrane. The chain is A-type ATP synthase subunit C from Pyrococcus horikoshii (strain ATCC 700860 / DSM 12428 / JCM 9974 / NBRC 100139 / OT-3).